A 327-amino-acid polypeptide reads, in one-letter code: 2-methoxy-6-polyprenyl-1,4-benzoquinol methylase, mitochondrial (327 aa).

The transit peptide at 1–42 directs the protein to the mitochondrion; that stretch reads MAAPGSCALWSYCGRGWSRAMRGCQLLGLRSSWPGDLLSARL. Residues threonine 117, aspartate 171, and 199–200 contribute to the S-adenosyl-L-methionine site; that span reads DA.

It belongs to the class I-like SAM-binding methyltransferase superfamily. MenG/UbiE family. In terms of assembly, component of a multi-subunit COQ enzyme complex, composed of at least COQ3, COQ4, COQ5, COQ6, COQ7 and COQ9. Interacts with PYURF; the interaction is direct, stabilizes COQ5 protein and associates PYURF with COQ enzyme complex. In terms of tissue distribution, widely expressed, with highest levels in liver, lung, placenta and skeletal muscle.

It localises to the mitochondrion inner membrane. The enzyme catalyses 2-methoxy-6-(all-trans-decaprenyl)benzene-1,4-diol + S-adenosyl-L-methionine = 5-methoxy-2-methyl-3-(all-trans-decaprenyl)benzene-1,4-diol + S-adenosyl-L-homocysteine + H(+). It participates in cofactor biosynthesis; ubiquinone biosynthesis. Functionally, methyltransferase required for the conversion of 2-decaprenyl-6-methoxy-1,4-benzoquinol (DDMQH2) to 2-decaprenyl-3-methyl-6-methoxy-1,4-benzoquinol (DMQH2). This is 2-methoxy-6-polyprenyl-1,4-benzoquinol methylase, mitochondrial from Homo sapiens (Human).